A 56-amino-acid polypeptide reads, in one-letter code: MAKKNKNVLVRLVSTAGTGVFWVKKRNPKTQTEKLSFRKYDKVVRKHVLFKEEKIK.

Belongs to the bacterial ribosomal protein bL33 family.

The protein is Large ribosomal subunit protein bL33 of Rickettsia africae (strain ESF-5).